The following is a 277-amino-acid chain: MTQQIDRYAVFGNPIEHSKSPFIHTLFARQTNQPLIYTAETAPKEGFVEAVKAFFAEGGKGCNVTLPFKEEAYQFASRLTERAQLAGAVNTLKKLDDGDIIGDNTDGAGLVQDLLQHQVVLAGARILVIGAGGAARGVLKPLLDQKPTSLTITNRTFSKAEKLAVLFAAYGSVTAKEMNTVTEEYDVIINSTSASLSGELPALSSSIFAANSTSYDMMYGKGDTTFNQWAKQHGAAHAYDGLGMLVGQAAESFMLWRGLRPGSKQILRELRKNLEGL.

Shikimate-binding positions include 18-20 and T65; that span reads SKS. K69 acts as the Proton acceptor in catalysis. E81 serves as a coordination point for NADP(+). Shikimate contacts are provided by N90 and D106. Residues 130–134, 154–159, and M217 each bind NADP(+); these read GAGGA and NRTFSK. Y219 provides a ligand contact to shikimate. Position 241 (G241) interacts with NADP(+).

It belongs to the shikimate dehydrogenase family. Homodimer.

It catalyses the reaction shikimate + NADP(+) = 3-dehydroshikimate + NADPH + H(+). Its pathway is metabolic intermediate biosynthesis; chorismate biosynthesis; chorismate from D-erythrose 4-phosphate and phosphoenolpyruvate: step 4/7. In terms of biological role, involved in the biosynthesis of the chorismate, which leads to the biosynthesis of aromatic amino acids. Catalyzes the reversible NADPH linked reduction of 3-dehydroshikimate (DHSA) to yield shikimate (SA). This is Shikimate dehydrogenase (NADP(+)) from Vibrio vulnificus (strain CMCP6).